The primary structure comprises 349 residues: Ribosome production factor 1 (349 aa).

Disordered stretches follow at residues M1–K58 and K71–I105. Residues K87 to P97 show a composition bias toward basic and acidic residues. The 184-residue stretch at P142 to D325 folds into the Brix domain. The RNA-binding stretch occupies residues V303–Q320.

The protein localises to the nucleus. It localises to the nucleolus. In terms of biological role, may be required for ribosome biogenesis. The polypeptide is Ribosome production factor 1 (Rpf1) (Mus musculus (Mouse)).